The chain runs to 72 residues: SRY-related protein ADW4 (72 aa).

Positions 1–69 (VKRPMNAFMV…KHMADYPNYK (69 aa)) form a DNA-binding region, HMG box.

It is found in the nucleus. The protein is SRY-related protein ADW4 of Alligator mississippiensis (American alligator).